A 312-amino-acid polypeptide reads, in one-letter code: tRNA-dihydrouridine(16) synthase (312 aa).

FMN-binding positions include 7–9 and Gln-68; that span reads PME. The active-site Proton donor is Cys-98. Residues Lys-139, 200–202, and 224–225 contribute to the FMN site; these read NGE and GR.

The protein belongs to the Dus family. DusC subfamily. The cofactor is FMN.

The enzyme catalyses 5,6-dihydrouridine(16) in tRNA + NADP(+) = uridine(16) in tRNA + NADPH + H(+). The catalysed reaction is 5,6-dihydrouridine(16) in tRNA + NAD(+) = uridine(16) in tRNA + NADH + H(+). Catalyzes the synthesis of 5,6-dihydrouridine (D), a modified base found in the D-loop of most tRNAs, via the reduction of the C5-C6 double bond in target uridines. Specifically modifies U16 in tRNAs. In Salmonella typhimurium (strain LT2 / SGSC1412 / ATCC 700720), this protein is tRNA-dihydrouridine(16) synthase.